We begin with the raw amino-acid sequence, 804 residues long: Leucine--tRNA ligase (804 aa).

The 'HIGH' region motif lies at 39–50; it reads PFPSGKGLHVGH. The 'KMSKS' region signature appears at 573-577; that stretch reads KMSKS. Lysine 576 is a binding site for ATP.

This sequence belongs to the class-I aminoacyl-tRNA synthetase family.

The protein resides in the cytoplasm. The catalysed reaction is tRNA(Leu) + L-leucine + ATP = L-leucyl-tRNA(Leu) + AMP + diphosphate. The sequence is that of Leucine--tRNA ligase from Lactobacillus johnsonii (strain CNCM I-12250 / La1 / NCC 533).